Reading from the N-terminus, the 356-residue chain is Protein HEXIM1 (356 aa).

Basic and acidic residues-rich tracts occupy residues 1-11 and 24-47; these read MAEPLLSEHQH and VHEEQNSERPPSAEERVPKEDSRW. Positions 1–160 are disordered; sequence MAEPLLSEHQ…RRRPSKKKRH (160 aa). Residues 48–58 show a composition bias toward polar residues; that stretch reads QSRASLQSGSR. Basic and acidic residues predominate over residues 84–93; sequence CLEKGEKGQN. Residues Ser-98 and Ser-103 each carry the phosphoserine modification. Residues 145-160 show a composition bias toward basic residues; the sequence is LGKKKHRRRPSKKKRH. The tract at residues 147–174 is basic region; mediates nuclear localization and interaction with 7SK snRNA and NR3C1; the sequence is KKKHRRRPSKKKRHWKPYYKLTWEEKKK. The tract at residues 199-202 is interaction with P-TEFb; sequence PYNT. The interval 207–247 is autoinhibitory acidic region; in absence of 7SK snRNA interacts with the basic region preventing interaction with P-TEFb and modulating subcellular localization; sequence MDDHDQEEPDLKTGLYPKRAAAKSDDTSDEDFVEEAGEEDG. The interval 209-259 is disordered; the sequence is DHDQEEPDLKTGLYPKRAAAKSDDTSDEDFVEEAGEEDGGSDGMGGDGSEF. The residue at position 230 (Ser-230) is a Phosphoserine. Thr-233 carries the phosphothreonine modification. Residues 233-248 are compositionally biased toward acidic residues; the sequence is TSDEDFVEEAGEEDGG. A phosphoserine mark is found at Ser-234, Ser-249, and Ser-257. Residues 280–346 are a coiled coil; the sequence is SKQELIKEYL…LTENELHRQQ (67 aa). Residues 283–311 are mediates interaction with CCNT1; it reads ELIKEYLELEKCLSRKEDENNRLRLESKR. A required for inhibition of ESR1-dependent transcription region spans residues 307–352; sequence LESKRLGGVDARVRELELELDRLRAENRQLLTENELHRQQERAPPS. The segment at 337–356 is disordered; it reads LTENELHRQQERAPPSKFGD.

It belongs to the HEXIM family. In terms of assembly, homooligomer and heterooligomer with HEXIM2; probably dimeric. Core component of the 7SK RNP complex, at least composed of 7SK RNA, LARP7, MEPCE, HEXIM1 (or HEXIM2) and P-TEFb (composed of CDK9 and CCNT1/cyclin-T1). Interacts with the N-CoR complex through NCOR1. Interacts with ESR1 and NR3C1. May interact with NF-kappa-B through RELA. Interacts with CCNT2; mediates formation of a tripartite complex with KPNA2. Part of the HDP-RNP complex composed of at least HEXIM1, PRKDC, XRCC5, XRCC6, paraspeckle proteins (SFPQ, NONO, PSPC1, RBM14, and MATR3) and NEAT1 non-coding RNA.

The protein resides in the nucleus. The protein localises to the cytoplasm. Transcriptional regulator which functions as a general RNA polymerase II transcription inhibitor. Core component of the 7SK RNP complex: in cooperation with 7SK snRNA sequesters P-TEFb in a large inactive 7SK snRNP complex preventing RNA polymerase II phosphorylation and subsequent transcriptional elongation. May also regulate NF-kappa-B, ESR1, NR3C1 and CIITA-dependent transcriptional activity. Plays a role in the regulation of DNA virus-mediated innate immune response by assembling into the HDP-RNP complex, a complex that serves as a platform for IRF3 phosphorylation and subsequent innate immune response activation through the cGAS-STING pathway. This is Protein HEXIM1 (Hexim1) from Rattus norvegicus (Rat).